Here is an 84-residue protein sequence, read N- to C-terminus: DNA-directed RNA polymerase subunit Rpo5 (84 aa).

Belongs to the archaeal Rpo5/eukaryotic RPB5 RNA polymerase subunit family. Part of the 13-subunit RNA polymerase complex.

It localises to the cytoplasm. The enzyme catalyses RNA(n) + a ribonucleoside 5'-triphosphate = RNA(n+1) + diphosphate. Functionally, DNA-dependent RNA polymerase (RNAP) catalyzes the transcription of DNA into RNA using the four ribonucleoside triphosphates as substrates. The chain is DNA-directed RNA polymerase subunit Rpo5 from Saccharolobus solfataricus (strain ATCC 35092 / DSM 1617 / JCM 11322 / P2) (Sulfolobus solfataricus).